Reading from the N-terminus, the 375-residue chain is Nucleosome assembly protein 1-like 4 (375 aa).

A disordered region spans residues 1–31 (MADHSFSDGVPSDSVEAAKNASNTEKLTDQV). Alanine 2 is subject to N-acetylalanine. Serine 5, serine 7, and serine 12 each carry phosphoserine. Residues 20 to 31 (NASNTEKLTDQV) show a composition bias toward polar residues. Phosphothreonine is present on threonine 51. Phosphoserine occurs at positions 53 and 54. At threonine 58 the chain carries Phosphothreonine. Lysine 105 is modified (N6-acetyllysine). Residues 116–137 (PTDAESEWHSENEEEEKLAGDM) form a disordered region. The span at 121-137 (SEWHSENEEEEKLAGDM) shows a compositional bias: basic and acidic residues. At serine 125 the chain carries Phosphoserine. Residue lysine 146 is modified to N6-acetyllysine. The Nuclear localization signal motif lies at 265 to 271 (IKKKQKH). Serine 304 is modified (phosphoserine). The tract at residues 339–375 (AIEDDDNFEEGEEGEEEELEGDEEGEDEDDAEINPKV) is disordered.

It belongs to the nucleosome assembly protein (NAP) family. In terms of assembly, interacts with core (H2A, CD2APH2B, H3, H4) and linker (H1) histones. (Microbial infection) Interacts with Chikungunya virus non-structural protein 3 (via C-terminus). Phosphorylated at the G0/G1 boundary but it is not phosphorylated in S-phase. Phosphorylated protein remains in the cytoplasm in a complex with histones during the G0/G1 transition, whereas dephosphorylation triggers its transport into the nucleus at the G1/S-boundary. In terms of processing, polyglutamylated by TTLL4, a modification that occurs exclusively on glutamate residues and results in polyglutamate chains on the gamma-carboxyl group. Some residues may also be monoglycylated but not polyglycylated due to the absence of functional TTLL10 in human. As to expression, ubiquitous. Biallelically expressed in fetal and adult tissues. Highest levels in testis.

The protein resides in the nucleus. The protein localises to the cytoplasm. Functionally, acts as a histone chaperone in nucleosome assembly. In Homo sapiens (Human), this protein is Nucleosome assembly protein 1-like 4.